The chain runs to 268 residues: MADQSIISALVLGLIEGLTEFIPVSSTAHVLLAGHFLGFKSPGNTFAVLIQLGAILAILLVYFQKLLAIALALPTSVKARRFVFSVLLAFLPAALIGAAAHGFIKSVLFETPMLICVVLIVGGIILYAIDRLPLTPRYTDVFDYPPSLALKIGLFQCLAMIPGTSRSGATIAGALLMGTDKRSAAEFSFFLAMPTMVGAFALDLYKNRDALSFDDVGLIAAGFIAAFIAGIFVVRSLLDFVSHRGFTPFAIWRILVGTAGLVGLWLLG.

Transmembrane regions (helical) follow at residues 5–25 (SIIS…IPVS), 43–63 (GNTF…LVYF), 84–104 (FSVL…HGFI), 107–127 (VLFE…IILY), 184–204 (AAEF…ALDL), 213–233 (FDDV…GIFV), and 248–268 (PFAI…WLLG).

It belongs to the UppP family.

The protein resides in the cell inner membrane. The enzyme catalyses di-trans,octa-cis-undecaprenyl diphosphate + H2O = di-trans,octa-cis-undecaprenyl phosphate + phosphate + H(+). In terms of biological role, catalyzes the dephosphorylation of undecaprenyl diphosphate (UPP). Confers resistance to bacitracin. This Rhizobium meliloti (strain 1021) (Ensifer meliloti) protein is Undecaprenyl-diphosphatase.